Here is a 344-residue protein sequence, read N- to C-terminus: L-rhamnose-proton symporter (344 aa).

A run of 10 helical transmembrane segments spans residues 4-24 (AITMGIFWHLIGAASAACFYA), 38-58 (WSVGGIVSWIILPWAISALLL), 68-88 (FSLSTLLPVFLFGAMWGIGNI), 101-121 (MGIGIAIGITLIVGTLMTPII), 137-157 (TLLGVLVALIGVGIVTRAGQL), 175-195 (LVLAVMCGIFSAGMSFAMNAA), 214-234 (LPSYVVIMGGGAIINLGFCFI), 259-279 (VLLSALGGLMWYLQFFFYAWG), 290-310 (ISWMLHMSFYVLCGGIVGLVL), and 323-343 (VLSLGCVVIIVAANIVGIGMA).

Belongs to the L-rhamnose transporter (TC 2.A.7.6) family.

The protein localises to the cell inner membrane. It catalyses the reaction L-rhamnopyranose(in) + H(+)(in) = L-rhamnopyranose(out) + H(+)(out). Uptake of L-rhamnose across the cytoplasmic membrane with the concomitant transport of protons into the cell (symport system). This Shigella dysenteriae serotype 1 (strain Sd197) protein is L-rhamnose-proton symporter.